A 939-amino-acid polypeptide reads, in one-letter code: Valine--tRNA ligase (939 aa).

The 'HIGH' region signature appears at 47-57 (PNVTGILHMGH). Positions 563–567 (KLSKS) match the 'KMSKS' region motif. Residue lysine 566 participates in ATP binding. A coiled-coil region spans residues 874-939 (EHLAKERVRL…QSILDKLASL (66 aa)).

This sequence belongs to the class-I aminoacyl-tRNA synthetase family. ValS type 1 subfamily. As to quaternary structure, monomer.

Its subcellular location is the cytoplasm. It catalyses the reaction tRNA(Val) + L-valine + ATP = L-valyl-tRNA(Val) + AMP + diphosphate. Catalyzes the attachment of valine to tRNA(Val). As ValRS can inadvertently accommodate and process structurally similar amino acids such as threonine, to avoid such errors, it has a 'posttransfer' editing activity that hydrolyzes mischarged Thr-tRNA(Val) in a tRNA-dependent manner. In Chlamydia trachomatis serovar A (strain ATCC VR-571B / DSM 19440 / HAR-13), this protein is Valine--tRNA ligase.